We begin with the raw amino-acid sequence, 396 residues long: Elongation factor Tu (396 aa).

The 197-residue stretch at 10 to 206 (KPHVNIGTIG…AVDNYIPEPE (197 aa)) folds into the tr-type G domain. The tract at residues 19–26 (GHVDHGKT) is G1. 19–26 (GHVDHGKT) provides a ligand contact to GTP. Thr26 contacts Mg(2+). Positions 60 to 64 (GITIA) are G2. The segment at 81-84 (DCPG) is G3. Residues 81-85 (DCPGH) and 136-139 (NKAD) contribute to the GTP site. The segment at 136-139 (NKAD) is G4. Residues 174–176 (SAL) form a G5 region.

The protein belongs to the TRAFAC class translation factor GTPase superfamily. Classic translation factor GTPase family. EF-Tu/EF-1A subfamily. In terms of assembly, monomer.

The protein resides in the cytoplasm. The enzyme catalyses GTP + H2O = GDP + phosphate + H(+). Its function is as follows. GTP hydrolase that promotes the GTP-dependent binding of aminoacyl-tRNA to the A-site of ribosomes during protein biosynthesis. In Geobacter sulfurreducens (strain ATCC 51573 / DSM 12127 / PCA), this protein is Elongation factor Tu.